The primary structure comprises 79 residues: Small ribosomal subunit protein uS17 (79 aa).

Belongs to the universal ribosomal protein uS17 family. As to quaternary structure, part of the 30S ribosomal subunit.

In terms of biological role, one of the primary rRNA binding proteins, it binds specifically to the 5'-end of 16S ribosomal RNA. The polypeptide is Small ribosomal subunit protein uS17 (Orientia tsutsugamushi (strain Boryong) (Rickettsia tsutsugamushi)).